We begin with the raw amino-acid sequence, 169 residues long: Cell division inhibitor SulA (169 aa).

Positions A106 to Y112 are ftsZ binding. A lon protease binding region spans residues K162–H169.

It belongs to the SulA family. Interacts with FtsZ. Is rapidly cleaved and degraded by the Lon protease once DNA damage is repaired.

In terms of biological role, component of the SOS system and an inhibitor of cell division. Accumulation of SulA causes rapid cessation of cell division and the appearance of long, non-septate filaments. In the presence of GTP, binds a polymerization-competent form of FtsZ in a 1:1 ratio, thus inhibiting FtsZ polymerization and therefore preventing it from participating in the assembly of the Z ring. This mechanism prevents the premature segregation of damaged DNA to daughter cells during cell division. This chain is Cell division inhibitor SulA, found in Escherichia coli O81 (strain ED1a).